We begin with the raw amino-acid sequence, 341 residues long: Eukaryotic translation initiation factor 2 subunit 1 (341 aa).

In terms of domain architecture, S1 motif spans 16 to 87 (EDVVMVNVLS…EKGYIDLSKR (72 aa)). A Phosphoserine modification is found at Ser51. Residues 293-341 (AENAQVAGDDDEEDGADQEGMQFDPEKEFNHKGSGAGRANEEDEEEEED) form a disordered region. Over residues 300–309 (GDDDEEDGAD) the composition is skewed to acidic residues.

This sequence belongs to the eIF-2-alpha family. In terms of assembly, eukaryotic translation initiation factor 2 eIF2 is a heterotrimeric complex composed of an alpha, a beta and a gamma subunit. Phosphorylation of eIF-2-alpha impairs the recycling of eIF-2 between successive rounds of initiation and thus leads to inhibition of translation.

It is found in the cytoplasm. The protein localises to the cytosol. Its function is as follows. eIF-2 functions in the early steps of protein synthesis by forming a ternary complex with GTP and initiator tRNA. This pre-initiation complex mediates ribosomal recognition of a start codon during the scanning process of the leader region. In Drosophila melanogaster (Fruit fly), this protein is Eukaryotic translation initiation factor 2 subunit 1.